Here is a 302-residue protein sequence, read N- to C-terminus: MDDTALLQEEILRLKEKKNAILLAHNYQRPEVQDIADLTGDSLELARAAAAMQGDTIVFCGVDFMAETAAILAPDKTVLLPAADACCPMAEMVTAEELRFARARHPGAAVVCYVNTTAGVKAESDICCTSANAISVVNSLTEDRVIFVPDKNLGRYAARFTEKKVLPWEGFCLVHDRYTPDDVARAKDAHPGAAVVVHPECRPEVIDLADHVASTSGIIRYVQTSPGSEFIIGTEIGILHRLSKECPGKRCFPLSDKAVCVNMKKTTLVHVRDALVTGQPRITVPDEIASRARRAIGRMLAL.

2 residues coordinate iminosuccinate: histidine 25 and serine 42. [4Fe-4S] cluster is bound at residue cysteine 87. Iminosuccinate contacts are provided by residues 113 to 115 (YVN) and serine 130. Cysteine 172 serves as a coordination point for [4Fe-4S] cluster. Iminosuccinate is bound by residues 198–200 (HPE) and threonine 215. Cysteine 260 is a [4Fe-4S] cluster binding site.

Belongs to the quinolinate synthase family. Type 2 subfamily. Requires [4Fe-4S] cluster as cofactor.

It is found in the cytoplasm. The catalysed reaction is iminosuccinate + dihydroxyacetone phosphate = quinolinate + phosphate + 2 H2O + H(+). It functions in the pathway cofactor biosynthesis; NAD(+) biosynthesis; quinolinate from iminoaspartate: step 1/1. Its function is as follows. Catalyzes the condensation of iminoaspartate with dihydroxyacetone phosphate to form quinolinate. The protein is Quinolinate synthase of Methanoregula boonei (strain DSM 21154 / JCM 14090 / 6A8).